Here is a 295-residue protein sequence, read N- to C-terminus: Pyridoxal 5'-phosphate synthase subunit PdxS (295 aa).

D25 lines the D-ribose 5-phosphate pocket. K82 (schiff-base intermediate with D-ribose 5-phosphate) is an active-site residue. A D-ribose 5-phosphate-binding site is contributed by G154. R166 lines the D-glyceraldehyde 3-phosphate pocket. Residues G215 and 236–237 (GS) contribute to the D-ribose 5-phosphate site.

It belongs to the PdxS/SNZ family. In the presence of PdxT, forms a dodecamer of heterodimers.

The enzyme catalyses aldehydo-D-ribose 5-phosphate + D-glyceraldehyde 3-phosphate + L-glutamine = pyridoxal 5'-phosphate + L-glutamate + phosphate + 3 H2O + H(+). The protein operates within cofactor biosynthesis; pyridoxal 5'-phosphate biosynthesis. In terms of biological role, catalyzes the formation of pyridoxal 5'-phosphate from ribose 5-phosphate (RBP), glyceraldehyde 3-phosphate (G3P) and ammonia. The ammonia is provided by the PdxT subunit. Can also use ribulose 5-phosphate and dihydroxyacetone phosphate as substrates, resulting from enzyme-catalyzed isomerization of RBP and G3P, respectively. The chain is Pyridoxal 5'-phosphate synthase subunit PdxS from Bacillus anthracis (strain A0248).